The following is a 67-amino-acid chain: Archaeal histone HAN1 subunit A (67 aa).

Interaction with DNA stretches follow at residues 20–22 (RVS) and 54–57 (KTVK).

This sequence belongs to the archaeal histone HMF family. Heterodimer. Dimers then assemble into higher oligomers, with the DNA wrapped around the protein core.

The protein localises to the cytoplasm. The protein resides in the chromosome. Its function is as follows. Binds and compact DNA (95 to 150 base pairs) to form nucleosome-like structures that contain positive DNA supercoils. Increases the resistance of DNA to thermal denaturation (in vitro). This is Archaeal histone HAN1 subunit A (han1A) from Thermococcus zilligii.